Consider the following 173-residue polypeptide: Zinc finger matrin-type protein 5 (173 aa).

The segment at 51 to 79 adopts a C3H1-type zinc-finger fold; it reads ERSKEVCRKFVQTGQCVFGTSCRFSHMSE. Residues 83 to 111 are disordered; sequence KMLEQKIDDEKRQKEDPDQDGSSERSVDE.

As to quaternary structure, component of the U11/U12 snRNPs that are part of the U12-type spliceosome.

It is found in the nucleus. The polypeptide is Zinc finger matrin-type protein 5 (zmat5) (Danio rerio (Zebrafish)).